A 33-amino-acid polypeptide reads, in one-letter code: Neutrophil defensin 4 (33 aa).

Cystine bridges form between Cys-3–Cys-31, Cys-5–Cys-20, and Cys-10–Cys-30.

Belongs to the alpha-defensin family. HANP-2 could be a product of proteolytic N-terminal amino acid removal from HANP-4.

It is found in the secreted. Its function is as follows. Bactericidal activity, greater against Gram-positive bacteria. Low anti-fungi activity. The sequence is that of Neutrophil defensin 4 from Mesocricetus auratus (Golden hamster).